The chain runs to 192 residues: MRIPIIKYEIPIPENVKVSYENNILKVSGPKGEVERKFYHPLIKLSVNDNKIILETYFATRREKRLINTWRSHIKNMLEGVQNPFVYRLKVCYTHFPMRVKLEGNKLIVENFLGEKAPIIKELPYLDKVKVKIEQNKDETEIVVESPDKEKAGIVASMIEQSTRFLHKRKDRRRFTDGIWLYYKAGKNILEE.

It belongs to the universal ribosomal protein uL6 family. In terms of assembly, part of the 50S ribosomal subunit.

In terms of biological role, this protein binds to the 23S rRNA, and is important in its secondary structure. It is located near the subunit interface in the base of the L7/L12 stalk, and near the tRNA binding site of the peptidyltransferase center. The sequence is that of Large ribosomal subunit protein uL6 from Nanoarchaeum equitans (strain Kin4-M).